The following is a 221-amino-acid chain: Small ribosomal subunit protein uS3 (221 aa).

Residues Ile39–Lys108 form the KH type-2 domain.

The protein belongs to the universal ribosomal protein uS3 family. As to quaternary structure, part of the 30S ribosomal subunit. Forms a tight complex with proteins S10 and S14.

Functionally, binds the lower part of the 30S subunit head. Binds mRNA in the 70S ribosome, positioning it for translation. The sequence is that of Small ribosomal subunit protein uS3 from Clostridium beijerinckii (strain ATCC 51743 / NCIMB 8052) (Clostridium acetobutylicum).